Consider the following 676-residue polypeptide: Electrogenic aspartate/glutamate antiporter SLC25A13, mitochondrial (676 aa).

Ala2 bears the N-acetylalanine mark. The interval Ala2–Pro295 is regulatory N-terminal domain. The Mitochondrial intermembrane portion of the chain corresponds to Ala2–Arg332. 4 EF-hand domains span residues Ser51–Cys86, Ala87–His122, Ile125–Glu157, and Ile158–His193. Positions 66, 68, 70, 72, and 77 each coordinate Ca(2+). Positions Leu296 to Gln312 are linker loop domain. Positions Phe322–Gly613 are carrier domain. Solcar repeat units lie at residues Ala327 to Lys419, Val427 to Ser511, and Val519 to Trp607. Residues Phe333–Ile350 traverse the membrane as a helical segment. Residues Asp351 to Arg393 lie on the Mitochondrial matrix side of the membrane. N6-acetyllysine occurs at positions 354 and 373. The chain crosses the membrane as a helical span at residues Gly394–Asn413. Topologically, residues Asp414 to Gly436 are mitochondrial intermembrane. Residues Gly437–Leu450 form a helical membrane-spanning segment. Over Glu451–Lys485 the chain is Mitochondrial matrix. N6-methyllysine is present on Lys454. Lys485 carries the N6-acetyllysine; alternate modification. Lys485 carries the N6-succinyllysine; alternate modification. A helical membrane pass occupies residues Gly486–Tyr505. Topologically, residues Ala506–Leu524 are mitochondrial intermembrane. Residues Leu525–Ala542 form a helical membrane-spanning segment. Residues Asp543–Lys581 are Mitochondrial matrix-facing. An N6-succinyllysine modification is found at Lys581. Residues Gly582–Tyr601 traverse the membrane as a helical segment. Residues Glu602–Ser676 lie on the Mitochondrial intermembrane side of the membrane. The C-terminal domain stretch occupies residues Gly614–Ser676. The residue at position 663 (Lys663) is an N6-acetyllysine. Ser667 is modified (phosphoserine).

Belongs to the mitochondrial carrier (TC 2.A.29) family. Homodimer (via N-terminus).

Its subcellular location is the mitochondrion inner membrane. The enzyme catalyses L-aspartate(in) + L-glutamate(out) + H(+)(out) = L-aspartate(out) + L-glutamate(in) + H(+)(in). It catalyses the reaction 3-sulfino-L-alanine(out) + L-glutamate(in) + H(+)(in) = 3-sulfino-L-alanine(in) + L-glutamate(out) + H(+)(out). It carries out the reaction 3-sulfino-L-alanine(out) + L-aspartate(in) = 3-sulfino-L-alanine(in) + L-aspartate(out). L-aspartate and 3-sulfino-L-alanine uptake are both inhibited by glisoxepide. Functionally, mitochondrial electrogenic aspartate/glutamate antiporter that favors efflux of aspartate and entry of glutamate and proton within the mitochondria as part of the malate-aspartate shuttle. Also mediates the uptake of L-cysteinesulfinate (3-sulfino-L-alanine) by mitochondria in exchange of L-glutamate and proton. Can also exchange L-cysteinesulfinate with aspartate in their anionic form without any proton translocation. Lacks transport activity towards gamma-aminobutyric acid (GABA). The sequence is that of Electrogenic aspartate/glutamate antiporter SLC25A13, mitochondrial from Rattus norvegicus (Rat).